A 101-amino-acid polypeptide reads, in one-letter code: Small ribosomal subunit protein uS14 (101 aa).

It belongs to the universal ribosomal protein uS14 family. As to quaternary structure, part of the 30S ribosomal subunit. Contacts proteins S3 and S10.

Functionally, binds 16S rRNA, required for the assembly of 30S particles and may also be responsible for determining the conformation of the 16S rRNA at the A site. The polypeptide is Small ribosomal subunit protein uS14 (Bartonella bacilliformis (strain ATCC 35685 / KC583 / Herrer 020/F12,63)).